Consider the following 370-residue polypeptide: 4-hydroxy-3-methylbut-2-en-1-yl diphosphate synthase (flavodoxin) (370 aa).

Residues cysteine 270, cysteine 273, cysteine 305, and glutamate 312 each contribute to the [4Fe-4S] cluster site.

This sequence belongs to the IspG family. [4Fe-4S] cluster is required as a cofactor.

It carries out the reaction (2E)-4-hydroxy-3-methylbut-2-enyl diphosphate + oxidized [flavodoxin] + H2O + 2 H(+) = 2-C-methyl-D-erythritol 2,4-cyclic diphosphate + reduced [flavodoxin]. It participates in isoprenoid biosynthesis; isopentenyl diphosphate biosynthesis via DXP pathway; isopentenyl diphosphate from 1-deoxy-D-xylulose 5-phosphate: step 5/6. Functionally, converts 2C-methyl-D-erythritol 2,4-cyclodiphosphate (ME-2,4cPP) into 1-hydroxy-2-methyl-2-(E)-butenyl 4-diphosphate. The polypeptide is 4-hydroxy-3-methylbut-2-en-1-yl diphosphate synthase (flavodoxin) (Saccharophagus degradans (strain 2-40 / ATCC 43961 / DSM 17024)).